The primary structure comprises 387 residues: MGEAVAGTVGERFRELYGAEPEGVWAAPGRVNLIGEHTDYNDGFVMPFALPHQAVAAVSRRDDGILRLHSADIDADPVELRVADLAPGSDKSWTAYPSGVLWALREAGHELTGADVHLASTVPSGAGLSSSAALEVVLALAMNDLYALGLRGWQLARLCQRAENVYVGAPVGIMDQTASACCEAGHALFLDTRDLSQRQIPFDLAAEGMRLLVVDTRVKHSHSEGEYGKRRAGCEKGAALLGVDALRDVPYADLDAALERLGDEEEVRRLVRHVVTEDERVERVVALLESGDTRAIGAVLVEGHASLRDDFRISCPELDLVVDTALASGALGARMTGGGFGGSAIVLVEAAGVDAVTKAVEDAFAAAGLKAPRVFEAVPSAGARRLV.

A substrate-binding site is contributed by 36–39 (EHTD). ATP-binding positions include S70 and 125 to 131 (GAGLSSS). Mg(2+) contacts are provided by S131 and E163. Catalysis depends on D175, which acts as the Proton acceptor. Residue Y227 participates in substrate binding.

This sequence belongs to the GHMP kinase family. GalK subfamily.

The protein resides in the cytoplasm. It catalyses the reaction alpha-D-galactose + ATP = alpha-D-galactose 1-phosphate + ADP + H(+). Its pathway is carbohydrate metabolism; galactose metabolism. Functionally, catalyzes the transfer of the gamma-phosphate of ATP to D-galactose to form alpha-D-galactose-1-phosphate (Gal-1-P). This Streptomyces coelicolor (strain ATCC BAA-471 / A3(2) / M145) protein is Galactokinase.